A 140-amino-acid chain; its full sequence is Nucleoside diphosphate kinase (140 aa).

Residues Lys-11, Phe-59, Arg-87, Thr-93, Arg-104, and Asn-114 each coordinate ATP. The active-site Pros-phosphohistidine intermediate is His-117.

This sequence belongs to the NDK family. In terms of assembly, homotetramer. Mg(2+) serves as cofactor.

Its subcellular location is the cytoplasm. It carries out the reaction a 2'-deoxyribonucleoside 5'-diphosphate + ATP = a 2'-deoxyribonucleoside 5'-triphosphate + ADP. It catalyses the reaction a ribonucleoside 5'-diphosphate + ATP = a ribonucleoside 5'-triphosphate + ADP. Major role in the synthesis of nucleoside triphosphates other than ATP. The ATP gamma phosphate is transferred to the NDP beta phosphate via a ping-pong mechanism, using a phosphorylated active-site intermediate. This Gluconobacter oxydans (strain 621H) (Gluconobacter suboxydans) protein is Nucleoside diphosphate kinase.